Here is a 413-residue protein sequence, read N- to C-terminus: S-adenosylmethionine synthase (413 aa).

Residue H15 participates in ATP binding. Residue D17 coordinates Mg(2+). Residue E43 coordinates K(+). Positions 56 and 100 each coordinate L-methionine. A flexible loop region spans residues 100-110; the sequence is QSPDISQGVNE. Residues 171–173, 248–249, D257, 263–264, A280, and K284 contribute to the ATP site; these read DGK, KF, and RK. D257 contributes to the L-methionine binding site. K288 serves as a coordination point for L-methionine.

This sequence belongs to the AdoMet synthase family. Homotetramer; dimer of dimers. Requires Mg(2+) as cofactor. K(+) serves as cofactor.

Its subcellular location is the cytoplasm. The catalysed reaction is L-methionine + ATP + H2O = S-adenosyl-L-methionine + phosphate + diphosphate. It functions in the pathway amino-acid biosynthesis; S-adenosyl-L-methionine biosynthesis; S-adenosyl-L-methionine from L-methionine: step 1/1. Its function is as follows. Catalyzes the formation of S-adenosylmethionine (AdoMet) from methionine and ATP. The overall synthetic reaction is composed of two sequential steps, AdoMet formation and the subsequent tripolyphosphate hydrolysis which occurs prior to release of AdoMet from the enzyme. The protein is S-adenosylmethionine synthase of Prochlorococcus marinus subsp. pastoris (strain CCMP1986 / NIES-2087 / MED4).